Reading from the N-terminus, the 232-residue chain is Ion-translocating oxidoreductase complex subunit E (232 aa).

5 consecutive transmembrane segments (helical) span residues 39–59 (LGLGLATTLVLTLTNLTISSL), 69–89 (IPIYVMIIASVVSVVQMLINA), 92–112 (FGLYQSLGIFIPLIVTNCIVV), 125–145 (ALSALDGFSIGMGATCAMFVL), and 182–202 (PFLLAMLPPGAFIGLGMMLAV).

This sequence belongs to the NqrDE/RnfAE family. As to quaternary structure, the complex is composed of six subunits: RnfA, RnfB, RnfC, RnfD, RnfE and RnfG.

The protein resides in the cell inner membrane. Part of a membrane-bound complex that couples electron transfer with translocation of ions across the membrane. In Klebsiella pneumoniae (strain 342), this protein is Ion-translocating oxidoreductase complex subunit E.